Consider the following 434-residue polypeptide: Glutamate-1-semialdehyde 2,1-aminomutase 1 (434 aa).

Lysine 268 carries the post-translational modification N6-(pyridoxal phosphate)lysine.

Belongs to the class-III pyridoxal-phosphate-dependent aminotransferase family. HemL subfamily. As to quaternary structure, homodimer. Pyridoxal 5'-phosphate serves as cofactor.

Its subcellular location is the cytoplasm. It carries out the reaction (S)-4-amino-5-oxopentanoate = 5-aminolevulinate. The protein operates within porphyrin-containing compound metabolism; protoporphyrin-IX biosynthesis; 5-aminolevulinate from L-glutamyl-tRNA(Glu): step 2/2. This chain is Glutamate-1-semialdehyde 2,1-aminomutase 1, found in Shouchella clausii (strain KSM-K16) (Alkalihalobacillus clausii).